The following is a 141-amino-acid chain: MALKIRLARGGAKKRPFYRVVIADTRSPRDGRFIEKIGTFNPLLPKDNAERIKVDIERAKHWLSVGALPTDRVARFLDDAGVYTRKARSNPEKSKPKAKAQERLEAARMAEEEAAAAAKAAAEAPAEEAPAAEAPAEEAQA.

Positions 84–141 are disordered; sequence TRKARSNPEKSKPKAKAQERLEAARMAEEEAAAAAKAAAEAPAEEAPAAEAPAEEAQA. Positions 89 to 111 are enriched in basic and acidic residues; sequence SNPEKSKPKAKAQERLEAARMAE. The span at 115-141 shows a compositional bias: low complexity; the sequence is AAAAKAAAEAPAEEAPAAEAPAEEAQA.

It belongs to the bacterial ribosomal protein bS16 family.

In Parvibaculum lavamentivorans (strain DS-1 / DSM 13023 / NCIMB 13966), this protein is Small ribosomal subunit protein bS16.